We begin with the raw amino-acid sequence, 289 residues long: Proteasome subunit beta (289 aa).

A propeptide spans 1-59 (MEHTPRNAGFALPAAYMSTMTSSFIDFLKAEAPDLLPRARVENMPAVPGGGSAFEPPHG) (removed in mature form; by autocatalysis). Threonine 60 acts as the Nucleophile in catalysis.

Belongs to the peptidase T1B family. In terms of assembly, the 20S proteasome core is composed of 14 alpha and 14 beta subunits that assemble into four stacked heptameric rings, resulting in a barrel-shaped structure. The two inner rings, each composed of seven catalytic beta subunits, are sandwiched by two outer rings, each composed of seven alpha subunits. The catalytic chamber with the active sites is on the inside of the barrel. Has a gated structure, the ends of the cylinder being occluded by the N-termini of the alpha-subunits. Is capped by the proteasome-associated ATPase, ARC.

It is found in the cytoplasm. The enzyme catalyses Cleavage of peptide bonds with very broad specificity.. It participates in protein degradation; proteasomal Pup-dependent pathway. With respect to regulation, the formation of the proteasomal ATPase ARC-20S proteasome complex, likely via the docking of the C-termini of ARC into the intersubunit pockets in the alpha-rings, may trigger opening of the gate for substrate entry. Interconversion between the open-gate and close-gate conformations leads to a dynamic regulation of the 20S proteasome proteolysis activity. Its function is as follows. Component of the proteasome core, a large protease complex with broad specificity involved in protein degradation. This Saccharomonospora viridis (strain ATCC 15386 / DSM 43017 / JCM 3036 / CCUG 5913 / NBRC 12207 / NCIMB 9602 / P101) (Thermoactinomyces viridis) protein is Proteasome subunit beta.